The chain runs to 242 residues: Glutamine transport ATP-binding protein GlnQ (242 aa).

The ABC transporter domain occupies 2–236 (ITFQNVNKHY…PKEERARLFL (235 aa)). ATP is bound at residue 34-41 (GPSGSGKS).

Belongs to the ABC transporter superfamily. In terms of assembly, the complex is composed of two ATP-binding proteins (GlnQ), two transmembrane proteins (GlnM and GlnP) and a solute-binding protein (GlnH).

The protein localises to the cell membrane. In terms of biological role, part of the ABC transporter complex GlnHMPQ involved in glutamine transport. Probably responsible for energy coupling to the transport system. This Bacillus subtilis (strain 168) protein is Glutamine transport ATP-binding protein GlnQ (glnQ).